The sequence spans 250 residues: Phosphoribosylaminoimidazole-succinocarboxamide synthase (250 aa).

This sequence belongs to the SAICAR synthetase family.

It catalyses the reaction 5-amino-1-(5-phospho-D-ribosyl)imidazole-4-carboxylate + L-aspartate + ATP = (2S)-2-[5-amino-1-(5-phospho-beta-D-ribosyl)imidazole-4-carboxamido]succinate + ADP + phosphate + 2 H(+). It functions in the pathway purine metabolism; IMP biosynthesis via de novo pathway; 5-amino-1-(5-phospho-D-ribosyl)imidazole-4-carboxamide from 5-amino-1-(5-phospho-D-ribosyl)imidazole-4-carboxylate: step 1/2. The sequence is that of Phosphoribosylaminoimidazole-succinocarboxamide synthase from Chloroflexus aggregans (strain MD-66 / DSM 9485).